The primary structure comprises 201 residues: Probable molybdenum cofactor guanylyltransferase (201 aa).

GTP contacts are provided by residues 16-18, lysine 28, aspartate 75, and aspartate 107; that span reads LAG. Aspartate 107 is a binding site for Mg(2+).

The protein belongs to the MobA family. Mg(2+) serves as cofactor.

The protein resides in the cytoplasm. It carries out the reaction Mo-molybdopterin + GTP + H(+) = Mo-molybdopterin guanine dinucleotide + diphosphate. Its function is as follows. Transfers a GMP moiety from GTP to Mo-molybdopterin (Mo-MPT) cofactor (Moco or molybdenum cofactor) to form Mo-molybdopterin guanine dinucleotide (Mo-MGD) cofactor. The polypeptide is Probable molybdenum cofactor guanylyltransferase (Mycobacterium ulcerans (strain Agy99)).